The primary structure comprises 257 residues: Hydroxyacylglutathione hydrolase (257 aa).

The Zn(2+) site is built by histidine 53, histidine 55, aspartate 57, histidine 58, histidine 109, aspartate 126, and histidine 164.

It belongs to the metallo-beta-lactamase superfamily. Glyoxalase II family. In terms of assembly, monomer. Zn(2+) serves as cofactor.

The enzyme catalyses an S-(2-hydroxyacyl)glutathione + H2O = a 2-hydroxy carboxylate + glutathione + H(+). It participates in secondary metabolite metabolism; methylglyoxal degradation; (R)-lactate from methylglyoxal: step 2/2. Thiolesterase that catalyzes the hydrolysis of S-D-lactoyl-glutathione to form glutathione and D-lactic acid. The sequence is that of Hydroxyacylglutathione hydrolase from Baumannia cicadellinicola subsp. Homalodisca coagulata.